The sequence spans 87 residues: U3-theraphotoxin-Hhn1j (87 aa).

Positions 1–24 (MVNMKASMFLTFAGLVLLFVVCYA) are cleaved as a signal peptide. The propeptide occupies 25-52 (SESEEKEFPKEMLSSIFAVDNDFKQEER). 3 disulfides stabilise this stretch: cysteine 54-cysteine 67, cysteine 61-cysteine 72, and cysteine 66-cysteine 79.

It belongs to the neurotoxin 10 (Hwtx-1) family. 51 (Hntx-8) subfamily. Hntx-8 sub-subfamily. As to expression, expressed by the venom gland.

Its subcellular location is the secreted. Its function is as follows. Ion channel inhibitor. This is U3-theraphotoxin-Hhn1j from Cyriopagopus hainanus (Chinese bird spider).